A 198-amino-acid polypeptide reads, in one-letter code: SCO2-like protein RF_0043 (198 aa).

Belongs to the SCO1/2 family.

This is SCO2-like protein RF_0043 from Rickettsia felis (strain ATCC VR-1525 / URRWXCal2) (Rickettsia azadi).